Reading from the N-terminus, the 288-residue chain is Adenylate kinase (288 aa).

65 to 70 is a binding site for ATP; sequence GVGKGT. An NMP region spans residues 85-114; that stretch reads ATGDLVRDELKSSGPLSKQLAEIVNQGKLV. Residues threonine 86, arginine 91, 112-114, 142-145, and glutamine 149 each bind AMP; these read KLV and GFPR. An LID region spans residues 178–226; it reads GRRICSECGKNFNVASIDVAGENGAPRISMARLNPPFTVCFKLITRADD. Arginine 179 provides a ligand contact to ATP. Positions 223 and 234 each coordinate AMP. Glycine 262 serves as a coordination point for ATP.

This sequence belongs to the adenylate kinase family. Monomer.

It localises to the cytoplasm. The enzyme catalyses AMP + ATP = 2 ADP. Catalyzes the reversible transfer of the terminal phosphate group between ATP and AMP. Plays an important role in cellular energy homeostasis and in adenine nucleotide metabolism. This is Adenylate kinase (ADK) from Solanum tuberosum (Potato).